Reading from the N-terminus, the 264-residue chain is Thymidylate synthase (264 aa).

A dUMP-binding site is contributed by Arg21. A (6R)-5,10-methylene-5,6,7,8-tetrahydrofolate-binding site is contributed by His51. 126–127 (RR) is a dUMP binding site. Residue Cys146 is the Nucleophile of the active site. DUMP-binding positions include 166–169 (RSCD), Asn177, and 207–209 (HLY). Asp169 provides a ligand contact to (6R)-5,10-methylene-5,6,7,8-tetrahydrofolate. (6R)-5,10-methylene-5,6,7,8-tetrahydrofolate is bound at residue Ala263.

Belongs to the thymidylate synthase family. Bacterial-type ThyA subfamily. As to quaternary structure, homodimer.

Its subcellular location is the cytoplasm. The enzyme catalyses dUMP + (6R)-5,10-methylene-5,6,7,8-tetrahydrofolate = 7,8-dihydrofolate + dTMP. It functions in the pathway pyrimidine metabolism; dTTP biosynthesis. Catalyzes the reductive methylation of 2'-deoxyuridine-5'-monophosphate (dUMP) to 2'-deoxythymidine-5'-monophosphate (dTMP) while utilizing 5,10-methylenetetrahydrofolate (mTHF) as the methyl donor and reductant in the reaction, yielding dihydrofolate (DHF) as a by-product. This enzymatic reaction provides an intracellular de novo source of dTMP, an essential precursor for DNA biosynthesis. The sequence is that of Thymidylate synthase from Escherichia coli O9:H4 (strain HS).